We begin with the raw amino-acid sequence, 284 residues long: 4-hydroxybenzoate octaprenyltransferase (284 aa).

8 helical membrane-spanning segments follow: residues 16-36 (PIGILLLLWPTLWALWMASDG), 40-60 (WTLVAIFTLGTVLMRSAGCAV), 91-111 (LLVALVLTLLAFALIWPLNTL), 132-152 (FFAIPQAYLGIAFGFGIPMGF), 157-177 (NTVPAAAWWLLVANVFWSVAY), 207-227 (AIIMFCYAMTLGIIGIVGWQF), 231-251 (IWFVAGLLLAAVCAAYHYTLI), and 259-279 (CFAAFNHNNWLGGAIFGGVAL).

This sequence belongs to the UbiA prenyltransferase family. It depends on Mg(2+) as a cofactor.

The protein resides in the cell inner membrane. It carries out the reaction all-trans-octaprenyl diphosphate + 4-hydroxybenzoate = 4-hydroxy-3-(all-trans-octaprenyl)benzoate + diphosphate. It participates in cofactor biosynthesis; ubiquinone biosynthesis. Functionally, catalyzes the prenylation of para-hydroxybenzoate (PHB) with an all-trans polyprenyl group. Mediates the second step in the final reaction sequence of ubiquinone-8 (UQ-8) biosynthesis, which is the condensation of the polyisoprenoid side chain with PHB, generating the first membrane-bound Q intermediate 3-octaprenyl-4-hydroxybenzoate. In Janthinobacterium sp. (strain Marseille) (Minibacterium massiliensis), this protein is 4-hydroxybenzoate octaprenyltransferase.